The sequence spans 290 residues: Shikimate dehydrogenase (NADP(+)) (290 aa).

Shikimate-binding positions include 18–20 and Thr66; that span reads SYS. Lys70 serves as the catalytic Proton acceptor. Residues Asn91 and Asp106 each coordinate shikimate. Residues 130 to 134 and Met230 each bind NADP(+); that span reads GNGGA. Residue Tyr232 participates in shikimate binding. Gly253 serves as a coordination point for NADP(+).

Belongs to the shikimate dehydrogenase family. In terms of assembly, homodimer.

The catalysed reaction is shikimate + NADP(+) = 3-dehydroshikimate + NADPH + H(+). The protein operates within metabolic intermediate biosynthesis; chorismate biosynthesis; chorismate from D-erythrose 4-phosphate and phosphoenolpyruvate: step 4/7. Involved in the biosynthesis of the chorismate, which leads to the biosynthesis of aromatic amino acids. Catalyzes the reversible NADPH linked reduction of 3-dehydroshikimate (DHSA) to yield shikimate (SA). This Prosthecochloris aestuarii (strain DSM 271 / SK 413) protein is Shikimate dehydrogenase (NADP(+)).